Consider the following 128-residue polypeptide: Diacylglycerol kinase (128 aa).

An a divalent metal cation-binding site is contributed by Glu-34. The next 2 helical transmembrane spans lie at 35-55 (SAFRQIVILALFCIVLASYLT) and 58-78 (FLEWGLLILPCFLSVVIELIN). Residue Glu-75 is the Proton acceptor of the active site. Glu-82 serves as a coordination point for a divalent metal cation. The helical transmembrane segment at 108–128 (LIGLIFWAFIWGRYLLTLYFN) threads the bilayer.

Belongs to the bacterial diacylglycerol kinase family. Mg(2+) serves as cofactor.

It is found in the cell inner membrane. The enzyme catalyses a 1,2-diacyl-sn-glycerol + ATP = a 1,2-diacyl-sn-glycero-3-phosphate + ADP + H(+). Catalyzes the ATP-dependent phosphorylation of sn-l,2-diacylglycerol (DAG) to phosphatidic acid. Involved in the recycling of diacylglycerol produced as a by-product during membrane-derived oligosaccharide (MDO) biosynthesis. In Helicobacter pylori (strain J99 / ATCC 700824) (Campylobacter pylori J99), this protein is Diacylglycerol kinase (dgkA).